The sequence spans 555 residues: MLIDRLAGAVPAHAWPTITVAGAVMVVVLLMRYLDYDKKVEVPVIGPGGRFTKWLGAIRNVWYAREAIHEVANGQHGKLGFQIPTMTRMDVFICDRALTREYYSLDEDHMSFRAVMSEEFQFKWLLPGQHHDVHRIPNSVIAKALSWQRTRASKADDPFFREFSAEFLYGFQEEMRAFTGCGNKSRLPFFSHAGDHTSGNSGWIAAPCFPLALKVIARLTTKSLFGEPLCRNPKFLDMCCEFGDAVPRDAMILRCFPDFIRPLLARFLAAPRGVKELQTVVLNEITSRRNSREKNPMKDLLDFSINWIDEHSADGWEDWHIADMMTNTVFAALHTSSQLVTHTLFELATRPEYVVPLREEIRQCFALYGNGTKAAIDAMHKMDSFIKETQRCNPLDASALARLVLKPYTFSNGLHVPKGSFIFTPNSPLFEDEQFYEDAKRFDGLRFARMRDDPKRKSDSPMTATSEYSMHFGIGRHACPGRYMVSDEVKLVMVHLLLHYDFAMANFGPRPKNMAFGKFILPDMQAKVWLRKSKDAGNTARVDPGAPDGVASEPS.

Residues 10 to 30 traverse the membrane as a helical segment; sequence VPAHAWPTITVAGAVMVVVLL. Residue Cys-479 participates in heme binding. The disordered stretch occupies residues 535-555; that stretch reads DAGNTARVDPGAPDGVASEPS.

The protein belongs to the cytochrome P450 family. Heme is required as a cofactor.

The protein resides in the membrane. The protein operates within secondary metabolite biosynthesis. Cytochrome P450 monooxygeanse; part of the gene cluster that mediates the biosynthesis of terpendoles, indole-diterpene (IDT) mycotoxins including terpendole I, terpendole K, terpendole C, as well as the kinesin Eg5 inhibitor terpendole E. TerQ is a C11-hydroxylating enzyme that converts paspalline into terpendole E. Is also able to hydroxylate 13-desoxyterpendole I at C-13 to produce terpendole I. Terpendoles biosynthesis begins with the synthesis of geranylgeranyl diphosphate (GGPP) by a yet unidentified GGPP synthase. Condensation of indole-3-glycerol phosphate with GGPP by the prenyltransferase terC then forms 3-geranylgeranylindole (3-GGI), followed by epoxidation and cyclization of this intermediate (by the FAD-dependent monooxygeanse terM and the terpene cyclase terB) to form paspaline. The cytochrome monooxygenase terQ then hydroxylates paspalline at C-11 to yield terpendole E. The cytochrome monooxygenase terP converts terpendole E to 13-desoxyterpendole I, and terQ converts 13-desoxyterpendole I into terpendole I. TerF and terK are required for conversion of terpendole I to terpendole C which is further converted to terpendole K. The polypeptide is Cytochrome P450 monooxygeanse terQ (Tolypocladium album (Soil fungus)).